A 377-amino-acid chain; its full sequence is Palmitoyltransferase ZDHHC16 (377 aa).

At 1–79 the chain is on the cytoplasmic side; sequence MRGQWSLLLG…WLVDNVIRWC (79 aa). A helical membrane pass occupies residues 80–100; the sequence is GVVFVVLVIVLTSSIVAIAYL. Residues 101 to 116 are Lumenal-facing; it reads CVLPLILQTYSVPRLC. Residues 117-137 traverse the membrane as a helical segment; it reads WHFFYSHWNLILIVFHYYQAI. Residues 138 to 198 are Cytoplasmic-facing; the sequence is TTPPGYPPQG…NNCVGHYNHR (61 aa). The region spanning 155–205 is the DHHC domain; sequence SICKKCINPKPARTHHCSICNRCVLKMDHHCPWLNNCVGHYNHRYFFSFCF. Cysteine 185 serves as the catalytic S-palmitoyl cysteine intermediate. Residues 199-219 form a helical membrane-spanning segment; that stretch reads YFFSFCFFMTLGCVYCSYGSW. Residues 220–266 are Lumenal-facing; it reads DLFREAYAAIEKMKQLDKNKLQAVANQTYHQTPPPTFSFRERVTHKS. A helical membrane pass occupies residues 267-287; sequence LVYLWFLCSSVALALGALTIW. At 288–377 the chain is on the cytoplasmic side; sequence HAVLISRGET…TAHSASVMAV (90 aa).

This sequence belongs to the DHHC palmitoyltransferase family. In terms of assembly, interacts with ABL1. Interacts with COPS5/JAB1.

The protein localises to the endoplasmic reticulum membrane. It catalyses the reaction L-cysteinyl-[protein] + hexadecanoyl-CoA = S-hexadecanoyl-L-cysteinyl-[protein] + CoA. Its function is as follows. Palmitoyl acyltransferase that mediates palmitoylation of proteins such as PLN and ZDHHC6. Required during embryonic heart development and cardiac function, possibly by mediating palmitoylation of PLN, thereby affecting PLN phosphorylation and homooligomerization. Also required for eye development. Palmitoylates ZDHHC6, affecting the quaternary assembly of ZDHHC6, its localization, stability and function. May play a role in DNA damage response. May be involved in apoptosis regulation. Involved in the proliferation of neural stem cells by regulating the FGF/ERK pathway. The protein is Palmitoyltransferase ZDHHC16 of Bos taurus (Bovine).